We begin with the raw amino-acid sequence, 362 residues long: Aminomethyltransferase (362 aa).

Belongs to the GcvT family. As to quaternary structure, the glycine cleavage system is composed of four proteins: P, T, L and H.

The catalysed reaction is N(6)-[(R)-S(8)-aminomethyldihydrolipoyl]-L-lysyl-[protein] + (6S)-5,6,7,8-tetrahydrofolate = N(6)-[(R)-dihydrolipoyl]-L-lysyl-[protein] + (6R)-5,10-methylene-5,6,7,8-tetrahydrofolate + NH4(+). In terms of biological role, the glycine cleavage system catalyzes the degradation of glycine. In Listeria welshimeri serovar 6b (strain ATCC 35897 / DSM 20650 / CCUG 15529 / CIP 8149 / NCTC 11857 / SLCC 5334 / V8), this protein is Aminomethyltransferase.